A 100-amino-acid chain; its full sequence is Small ribosomal subunit protein uS14c (100 aa).

It belongs to the universal ribosomal protein uS14 family. In terms of assembly, part of the 30S ribosomal subunit.

The protein localises to the plastid. Its subcellular location is the chloroplast. Binds 16S rRNA, required for the assembly of 30S particles. The chain is Small ribosomal subunit protein uS14c from Cicer arietinum (Chickpea).